The following is a 362-amino-acid chain: Dihydroorotate dehydrogenase (quinone) (362 aa).

FMN contacts are provided by residues 60–64 (AGFDK) and T84. A substrate-binding site is contributed by K64. A substrate-binding site is contributed by 109-113 (NRMGF). N137 and N168 together coordinate FMN. Substrate is bound at residue N168. S171 functions as the Nucleophile in the catalytic mechanism. N173 lines the substrate pocket. FMN is bound by residues K213 and S241. Substrate is bound at residue 242 to 243 (NT). Residues G264, G293, and 314–315 (YS) each bind FMN.

It belongs to the dihydroorotate dehydrogenase family. Type 2 subfamily. Monomer. FMN is required as a cofactor.

It localises to the cell membrane. The catalysed reaction is (S)-dihydroorotate + a quinone = orotate + a quinol. Its pathway is pyrimidine metabolism; UMP biosynthesis via de novo pathway; orotate from (S)-dihydroorotate (quinone route): step 1/1. Functionally, catalyzes the conversion of dihydroorotate to orotate with quinone as electron acceptor. In Bartonella henselae (strain ATCC 49882 / DSM 28221 / CCUG 30454 / Houston 1) (Rochalimaea henselae), this protein is Dihydroorotate dehydrogenase (quinone).